The sequence spans 1002 residues: Mitogen-activated protein kinase kinase kinase 21 (1002 aa).

Residues 1-26 are disordered; that stretch reads MALPVAEGTADTPLSPARDDSGSTSS. In terms of domain architecture, SH3 spans 24–88; sequence TSSGMWAALY…PASYVAPCGP (65 aa). The Protein kinase domain maps to 110-390; sequence LELKELIGAG…QLTAIEEAVL (281 aa). ATP contacts are provided by residues 116-124 and K137; that span reads IGAGGFGQV. The active-site Proton acceptor is the D247. Position 283 is a phosphothreonine; by autocatalysis (T283). S287 is subject to Phosphoserine; by autocatalysis and MAP4K1. 2 leucine-zipper regions span residues 409-430 and 444-466; these read IQQM…EEEL and LRRR…LNVL. Disordered stretches follow at residues 508 to 531, 574 to 604, 640 to 689, 721 to 778, 797 to 823, and 878 to 899; these read TVQA…PPGS, GCTW…NSPW, HRKP…VGAP, AQAP…SHSS, LGNA…SGCE, and QSAP…RDLA. Residues S512, S527, and S531 each carry the phosphoserine modification. At T576 the chain carries Phosphothreonine. Over residues 584 to 596 the composition is skewed to basic and acidic residues; the sequence is TKERPEGRERVRP. S598 carries the post-translational modification Phosphoserine. A compositionally biased stretch (basic and acidic residues) spans 661 to 677; it reads DSQREDSSEAESREEGS. Composition is skewed to low complexity over residues 740–758 and 766–778; these read QPAS…QPSA and STLL…SHSS.

The protein belongs to the protein kinase superfamily. STE Ser/Thr protein kinase family. MAP kinase kinase kinase subfamily. In terms of assembly, homodimer. Interacts with TLR4. Mg(2+) serves as cofactor. Post-translationally, autophosphorylation on serine and threonine residues within the activation loop plays a role in enzyme activation.

The catalysed reaction is L-seryl-[protein] + ATP = O-phospho-L-seryl-[protein] + ADP + H(+). The enzyme catalyses L-threonyl-[protein] + ATP = O-phospho-L-threonyl-[protein] + ADP + H(+). Its activity is regulated as follows. Homodimerization via the leucine zipper domains is required for autophosphorylation and subsequent activation. Functionally, negative regulator of TLR4 signaling. Does not activate JNK1/MAPK8 pathway, p38/MAPK14, nor ERK2/MAPK1 pathways. This is Mitogen-activated protein kinase kinase kinase 21 (Map3k21) from Mus musculus (Mouse).